A 319-amino-acid polypeptide reads, in one-letter code: Methionyl-tRNA formyltransferase (319 aa).

110–113 serves as a coordination point for (6S)-5,6,7,8-tetrahydrofolate; sequence SLLP.

Belongs to the Fmt family.

The catalysed reaction is L-methionyl-tRNA(fMet) + (6R)-10-formyltetrahydrofolate = N-formyl-L-methionyl-tRNA(fMet) + (6S)-5,6,7,8-tetrahydrofolate + H(+). In terms of biological role, attaches a formyl group to the free amino group of methionyl-tRNA(fMet). The formyl group appears to play a dual role in the initiator identity of N-formylmethionyl-tRNA by promoting its recognition by IF2 and preventing the misappropriation of this tRNA by the elongation apparatus. This is Methionyl-tRNA formyltransferase from Geobacillus thermodenitrificans (strain NG80-2).